Reading from the N-terminus, the 203-residue chain is FMN-dependent NADH:quinone oxidoreductase (203 aa).

Residue 143–146 (SNGG) participates in FMN binding.

The protein belongs to the azoreductase type 1 family. In terms of assembly, homodimer. FMN is required as a cofactor.

The catalysed reaction is 2 a quinone + NADH + H(+) = 2 a 1,4-benzosemiquinone + NAD(+). The enzyme catalyses N,N-dimethyl-1,4-phenylenediamine + anthranilate + 2 NAD(+) = 2-(4-dimethylaminophenyl)diazenylbenzoate + 2 NADH + 2 H(+). In terms of biological role, quinone reductase that provides resistance to thiol-specific stress caused by electrophilic quinones. Its function is as follows. Also exhibits azoreductase activity. Catalyzes the reductive cleavage of the azo bond in aromatic azo compounds to the corresponding amines. This is FMN-dependent NADH:quinone oxidoreductase from Streptococcus suis (strain 98HAH33).